The chain runs to 210 residues: HTH-type transcriptional repressor FabR (210 aa).

One can recognise an HTH tetR-type domain in the interval 10–70; sequence KTRRSLVEAA…TMVDESGLML (61 aa). The H-T-H motif DNA-binding region spans 33–52; the sequence is SLREVAREAGIAPTSFYRHF.

As to quaternary structure, homodimer.

The protein resides in the cytoplasm. Its function is as follows. Represses the transcription of fabB, involved in unsaturated fatty acid (UFA) biosynthesis. By controlling UFA production, FabR directly influences the physical properties of the membrane bilayer. This Klebsiella pneumoniae subsp. pneumoniae (strain ATCC 700721 / MGH 78578) protein is HTH-type transcriptional repressor FabR.